Here is a 129-residue protein sequence, read N- to C-terminus: Large ribosomal subunit protein bL17 (129 aa).

This sequence belongs to the bacterial ribosomal protein bL17 family. As to quaternary structure, part of the 50S ribosomal subunit. Contacts protein L32.

The chain is Large ribosomal subunit protein bL17 from Pseudomonas aeruginosa (strain UCBPP-PA14).